Consider the following 347-residue polypeptide: 4-hydroxy-2-oxovalerate aldolase 2 (347 aa).

Residues 7–259 form the Pyruvate carboxyltransferase domain; it reads VRITDTSLRD…KTGIDFFDIA (253 aa). Position 15 to 16 (15 to 16) interacts with substrate; sequence RD. Aspartate 16 is a Mn(2+) binding site. Histidine 19 acts as the Proton acceptor in catalysis. Serine 169 and histidine 198 together coordinate substrate. The Mn(2+) site is built by histidine 198 and histidine 200. Position 289 (tyrosine 289) interacts with substrate.

Belongs to the 4-hydroxy-2-oxovalerate aldolase family.

It carries out the reaction (S)-4-hydroxy-2-oxopentanoate = acetaldehyde + pyruvate. This Mycobacterium marinum (strain ATCC BAA-535 / M) protein is 4-hydroxy-2-oxovalerate aldolase 2.